The primary structure comprises 718 residues: Polyribonucleotide nucleotidyltransferase (718 aa).

Mg(2+)-binding residues include Asp497 and Asp503. The 60-residue stretch at 564–623 (PRLLTLKIEPEHIGMVIGPGGKTIKGITEQTSCKIDIADDGTVTIASSEGERAERARQMI) folds into the KH domain. The region spanning 633-701 (GEVYLGRVTR…SKGRLNLTRL (69 aa)) is the S1 motif domain.

It belongs to the polyribonucleotide nucleotidyltransferase family. Interacts with RNase E (rne). Mg(2+) is required as a cofactor.

The protein localises to the cytoplasm. The enzyme catalyses RNA(n+1) + phosphate = RNA(n) + a ribonucleoside 5'-diphosphate. In terms of biological role, involved in mRNA degradation. Catalyzes the phosphorolysis of single-stranded polyribonucleotides processively in the 3'- to 5'-direction. In Synechocystis sp. (strain ATCC 27184 / PCC 6803 / Kazusa), this protein is Polyribonucleotide nucleotidyltransferase.